Reading from the N-terminus, the 380-residue chain is Cytochrome b (380 aa).

A run of 4 helical transmembrane segments spans residues 33 to 53, 77 to 98, 113 to 133, and 178 to 198; these read FGSL…FLAM, WLIR…FIHV, WNIG…GYVL, and FFAF…VHLL. The heme b site is built by His-83 and His-97. Positions 182 and 196 each coordinate heme b. His-201 lines the a ubiquinone pocket. 4 helical membrane passes run 226–246, 288–308, 320–340, and 347–367; these read IKDI…VLFF, LGGV…PLIN, ITQA…WIGG, and FTMI…MFMF.

It belongs to the cytochrome b family. As to quaternary structure, the cytochrome bc1 complex contains 11 subunits: 3 respiratory subunits (MT-CYB, CYC1 and UQCRFS1), 2 core proteins (UQCRC1 and UQCRC2) and 6 low-molecular weight proteins (UQCRH/QCR6, UQCRB/QCR7, UQCRQ/QCR8, UQCR10/QCR9, UQCR11/QCR10 and a cleavage product of UQCRFS1). This cytochrome bc1 complex then forms a dimer. It depends on heme b as a cofactor.

The protein localises to the mitochondrion inner membrane. Functionally, component of the ubiquinol-cytochrome c reductase complex (complex III or cytochrome b-c1 complex) that is part of the mitochondrial respiratory chain. The b-c1 complex mediates electron transfer from ubiquinol to cytochrome c. Contributes to the generation of a proton gradient across the mitochondrial membrane that is then used for ATP synthesis. The polypeptide is Cytochrome b (MT-CYB) (Calomys musculinus (Drylands vesper mouse)).